The following is a 1234-amino-acid chain: DNA-directed RNA polymerase subunit beta (1234 aa).

Residues G1187–G1234 are disordered. A compositionally biased stretch (acidic residues) spans P1192–G1234.

It belongs to the RNA polymerase beta chain family. The RNAP catalytic core consists of 2 alpha, 1 beta, 1 beta' and 1 omega subunit. When a sigma factor is associated with the core the holoenzyme is formed, which can initiate transcription.

The enzyme catalyses RNA(n) + a ribonucleoside 5'-triphosphate = RNA(n+1) + diphosphate. Its function is as follows. DNA-dependent RNA polymerase catalyzes the transcription of DNA into RNA using the four ribonucleoside triphosphates as substrates. The chain is DNA-directed RNA polymerase subunit beta from Caldanaerobacter subterraneus subsp. tengcongensis (strain DSM 15242 / JCM 11007 / NBRC 100824 / MB4) (Thermoanaerobacter tengcongensis).